A 428-amino-acid polypeptide reads, in one-letter code: MLDPKFLRNELEATAESLATRGFILDVERLSKLEEKRKSLQVATEELQASRNAISKSIGQAKAKGEDVAPIMAQVGDLGSQLDSKKAELAELLEELNAIALSVPNLPDASAPIGKDESENVEVRRWGTIKEYGFEVKDHVELGETLGGLDFKSAVKITGSRFIIMKGQIARMHRALAQFMLDLHTTEHGYTETYVPLLVNEDSLMGTGQLPKFGEDLFHTKPATEEGQGLSLIPTAEVPLTNIARDTIIDEAELPVKLTAHTPCFRSEAGSYGRDTRGLIRQHQFDKVELVQLVKPEDSMAALDALTGHAEKVLEKLGLPYRTVILCTGDMGFGSSKTFDIEVWLPAQNTYREISSCSNMQDFQARRMQARYKAADAKKPALLHTLNGSGLAVGRTLVAVLENYQNEDGSITVPEVLRPYMGGLEKIG.

Position 235–237 (threonine 235–glutamate 237) interacts with L-serine. Arginine 266–glutamate 268 lines the ATP pocket. An L-serine-binding site is contributed by glutamate 289. Glutamate 353–serine 356 contributes to the ATP binding site. Serine 389 provides a ligand contact to L-serine.

It belongs to the class-II aminoacyl-tRNA synthetase family. Type-1 seryl-tRNA synthetase subfamily. Homodimer. The tRNA molecule binds across the dimer.

It is found in the cytoplasm. It carries out the reaction tRNA(Ser) + L-serine + ATP = L-seryl-tRNA(Ser) + AMP + diphosphate + H(+). The catalysed reaction is tRNA(Sec) + L-serine + ATP = L-seryl-tRNA(Sec) + AMP + diphosphate + H(+). Its pathway is aminoacyl-tRNA biosynthesis; selenocysteinyl-tRNA(Sec) biosynthesis; L-seryl-tRNA(Sec) from L-serine and tRNA(Sec): step 1/1. In terms of biological role, catalyzes the attachment of serine to tRNA(Ser). Is also able to aminoacylate tRNA(Sec) with serine, to form the misacylated tRNA L-seryl-tRNA(Sec), which will be further converted into selenocysteinyl-tRNA(Sec). This Shewanella woodyi (strain ATCC 51908 / MS32) protein is Serine--tRNA ligase.